Here is a 308-residue protein sequence, read N- to C-terminus: D-alanine--D-alanine ligase (308 aa).

Residues 103-302 (KTVMATAGVP…FDELVQWMVE (200 aa)) form the ATP-grasp domain. 130–184 (MAPPYVIKPVADGSSVGVFMVTEAHEHPPQELFRDDWPHGEQLLVEKYVAGKELT) is a binding site for ATP. Residues Asp-252, Glu-269, and Asn-271 each coordinate Mg(2+).

It belongs to the D-alanine--D-alanine ligase family. Mg(2+) serves as cofactor. The cofactor is Mn(2+).

The protein localises to the cytoplasm. The catalysed reaction is 2 D-alanine + ATP = D-alanyl-D-alanine + ADP + phosphate + H(+). The protein operates within cell wall biogenesis; peptidoglycan biosynthesis. Functionally, cell wall formation. This chain is D-alanine--D-alanine ligase, found in Rhodopseudomonas palustris (strain BisB18).